The sequence spans 284 residues: 2-dehydro-3-deoxyphosphooctonate aldolase (284 aa).

This sequence belongs to the KdsA family.

It is found in the cytoplasm. It carries out the reaction D-arabinose 5-phosphate + phosphoenolpyruvate + H2O = 3-deoxy-alpha-D-manno-2-octulosonate-8-phosphate + phosphate. Its pathway is carbohydrate biosynthesis; 3-deoxy-D-manno-octulosonate biosynthesis; 3-deoxy-D-manno-octulosonate from D-ribulose 5-phosphate: step 2/3. The protein operates within bacterial outer membrane biogenesis; lipopolysaccharide biosynthesis. In Bordetella petrii (strain ATCC BAA-461 / DSM 12804 / CCUG 43448), this protein is 2-dehydro-3-deoxyphosphooctonate aldolase.